Here is a 289-residue protein sequence, read N- to C-terminus: Diaminopimelate epimerase (289 aa).

Positions 13, 47, and 67 each coordinate substrate. Residue C76 is the Proton donor of the active site. Substrate is bound by residues 77 to 78, N167, N200, and 218 to 219; these read GN and ER. C227 serves as the catalytic Proton acceptor. Position 228-229 (228-229) interacts with substrate; the sequence is GT.

Belongs to the diaminopimelate epimerase family. Homodimer.

The protein resides in the cytoplasm. It carries out the reaction (2S,6S)-2,6-diaminopimelate = meso-2,6-diaminopimelate. It participates in amino-acid biosynthesis; L-lysine biosynthesis via DAP pathway; DL-2,6-diaminopimelate from LL-2,6-diaminopimelate: step 1/1. Its function is as follows. Catalyzes the stereoinversion of LL-2,6-diaminopimelate (L,L-DAP) to meso-diaminopimelate (meso-DAP), a precursor of L-lysine and an essential component of the bacterial peptidoglycan. This Burkholderia mallei (strain NCTC 10247) protein is Diaminopimelate epimerase.